Reading from the N-terminus, the 237-residue chain is uncharacterized protein (237 aa).

The N-terminal stretch at 1-27 (MKSFLRKPKFWLLLLGGLSTSSIILSA) is a signal peptide. Residue Cys-28 is the site of N-palmitoyl cysteine attachment. Residue Cys-28 is the site of S-diacylglycerol cysteine attachment.

The protein belongs to the MG307/MG309/MG338 family.

It is found in the membrane. This is an uncharacterized protein from Mycoplasma pneumoniae (strain ATCC 29342 / M129 / Subtype 1) (Mycoplasmoides pneumoniae).